The following is a 363-amino-acid chain: MKLDSVQIRNLRNLQHVTFKPSHGVNFILGINGSGKSSILEAIHYLGFGRSFRTSKHKNVIQNEQESFTVFCECLEDSTTQRLGLSRSINDTVSVSINGIKGNKVSDLVSLLPVQIFTPQSSDILLGAPKLRRKYIDWCLFHVEHSFLTCSNAYSRLLKHNNALCRKQQVGYANPQRVYWTDLLAQYGSELTEFRNAMMTRLIPLITSNLAQFLPEFCVEISYYRGWEKGLELNEALTKSADRDYKNGYISVGPHKADVRFKISGKPAQEVLSRGQLRMLVAALQLATTQCLMSYTQKTCIFLLDDVGAELDAAKREVFIDRLLESNTQLFVTAIEEHQLEFIDKYQNKKMFHVEHGQVREES.

An ATP-binding site is contributed by 30–37 (GINGSGKS).

This sequence belongs to the RecF family.

The protein localises to the cytoplasm. The RecF protein is involved in DNA metabolism; it is required for DNA replication and normal SOS inducibility. RecF binds preferentially to single-stranded, linear DNA. It also seems to bind ATP. The sequence is that of DNA replication and repair protein RecF from Pseudoalteromonas atlantica (strain T6c / ATCC BAA-1087).